Consider the following 637-residue polypeptide: Glutathione hydrolase 3 (637 aa).

A helical membrane pass occupies residues 28-48; the sequence is LKISLLLLLILLATSGYYSFS. N50 carries an N-linked (GlcNAc...) asparagine glycan. R147 contacts L-glutamate. 3 N-linked (GlcNAc...) asparagine glycosylation sites follow: N271, N374, and N398. T418 serves as the catalytic Nucleophile. Residues T436, N438, E457, D460, 488-489, and 509-510 each bind L-glutamate; these read SS and GG. N553 is a glycosylation site (N-linked (GlcNAc...) asparagine).

The protein belongs to the gamma-glutamyltransferase family. Expressed in roots, cotyledons, leaves, flowers and siliques.

The protein localises to the vacuole membrane. It carries out the reaction an N-terminal (5-L-glutamyl)-[peptide] + an alpha-amino acid = 5-L-glutamyl amino acid + an N-terminal L-alpha-aminoacyl-[peptide]. It catalyses the reaction glutathione + H2O = L-cysteinylglycine + L-glutamate. The catalysed reaction is an S-substituted glutathione + H2O = an S-substituted L-cysteinylglycine + L-glutamate. The protein operates within sulfur metabolism; glutathione metabolism. May play a role in protecting plants from some xenobiotic chemicals by degrading vacuolar glutathione conjugates into cysteine conjugates. In Arabidopsis thaliana (Mouse-ear cress), this protein is Glutathione hydrolase 3 (GGT3).